Consider the following 366-residue polypeptide: Prostaglandin F2-alpha receptor (366 aa).

The Extracellular segment spans residues 1 to 31 (MSINSSKQPASSAAGLIANTTCQTENRLSVF). N-linked (GlcNAc...) asparagine glycans are attached at residues Asn4 and Asn19. A helical membrane pass occupies residues 32–55 (FSIIFMTVGIVSNSLAIAILMKAY). Residues 56 to 69 (QRFRRKSKASFLLL) are Cytoplasmic-facing. A helical transmembrane segment spans residues 70-90 (ASGLVITDFFGHLINGGIAVF). The Extracellular portion of the chain corresponds to 91 to 109 (VYASDKDWIRFDQSNILCS). Cysteines 108 and 186 form a disulfide. Residues 110 to 131 (VFGISMVFSGLCPLFLGSTMAI) form a helical membrane-spanning segment. At 132-152 (ERCIGVTNPLFHSTKITSKHV) the chain is on the cytoplasmic side. Residues 153 to 175 (KMILSGVCMFAVFVALLPILGHR) form a helical membrane-spanning segment. The Extracellular portion of the chain corresponds to 176–198 (DYQIQASRTWCFYNTEHIEDWED). A helical membrane pass occupies residues 199 to 224 (RFYLLFFSSLGLLALGISFSCNAVTG). Over 225–250 (VTLLRVKFRSQQHRQGRSHHLEMVIQ) the chain is Cytoplasmic. A helical membrane pass occupies residues 251–267 (LLAIMCVSCVCWSPFLV). The Extracellular portion of the chain corresponds to 268-285 (TMANIAINGNNSPVTCET). A helical membrane pass occupies residues 286 to 307 (TLFALRMATWNQILDPWVYILL). The Cytoplasmic segment spans residues 308 to 366 (RKAVLRNLYKLASRCCGVNIISLHIWELSSIKNSLKVAAISESPAAEKENQQASSEAGL).

This sequence belongs to the G-protein coupled receptor 1 family. In terms of tissue distribution, highest expression in pregnant ovary. Also found in a low extent in the kidney. In the brain, expressed in astrocytes and oligodendrocytes, and meningeal fibroblasts, but not in migroglia cells.

It localises to the cell membrane. Its function is as follows. Receptor for prostaglandin F2-alpha (PGF2-alpha). The activity of this receptor is mediated by G proteins which activate a phosphatidylinositol-calcium second messenger system. Initiates luteolysis in the corpus luteum. This chain is Prostaglandin F2-alpha receptor (Ptgfr), found in Rattus norvegicus (Rat).